We begin with the raw amino-acid sequence, 88 residues long: Small ribosomal subunit protein bS20 (88 aa).

The protein belongs to the bacterial ribosomal protein bS20 family.

Binds directly to 16S ribosomal RNA. The polypeptide is Small ribosomal subunit protein bS20 (Chelativorans sp. (strain BNC1)).